The primary structure comprises 80 residues: UPF0180 protein GK1051 (80 aa).

It belongs to the UPF0180 family.

The polypeptide is UPF0180 protein GK1051 (Geobacillus kaustophilus (strain HTA426)).